The following is a 309-amino-acid chain: Probable manganese-dependent inorganic pyrophosphatase (309 aa).

Residues His-9, Asp-13, Asp-15, Asp-75, His-97, and Asp-149 each contribute to the Mn(2+) site.

This sequence belongs to the PPase class C family. It depends on Mn(2+) as a cofactor.

It is found in the cytoplasm. It carries out the reaction diphosphate + H2O = 2 phosphate + H(+). The polypeptide is Probable manganese-dependent inorganic pyrophosphatase (Bacillus cereus (strain G9842)).